Consider the following 224-residue polypeptide: Octanoyl-[acyl-carrier-protein]:protein N-octanoyltransferase LIPT2, mitochondrial (224 aa).

The BPL/LPL catalytic domain occupies 37–217; sequence SNIPNTLLLC…AFTEQFNCTL (181 aa). Substrate contacts are provided by residues 81 to 88, 147 to 149, and 160 to 162; these read RGGLITFH, AIG, and GLA. Cys178 functions as the Acyl-thioester intermediate in the catalytic mechanism.

The protein belongs to the LipB family.

Its subcellular location is the mitochondrion. It carries out the reaction octanoyl-[ACP] + L-lysyl-[protein] = N(6)-octanoyl-L-lysyl-[protein] + holo-[ACP] + H(+). It functions in the pathway protein modification; protein lipoylation via endogenous pathway; protein N(6)-(lipoyl)lysine from octanoyl-[acyl-carrier-protein]: step 1/2. Functionally, catalyzes the transfer of endogenously produced octanoic acid from octanoyl-acyl-carrier-protein (octanoyl-ACP) onto the lipoyl domains of lipoate-dependent enzymes such as the protein H of the glycine cleavage system (GCSH). Lipoyl-ACP can also act as a substrate although octanoyl-ACP is likely to be the physiological substrate. This chain is Octanoyl-[acyl-carrier-protein]:protein N-octanoyltransferase LIPT2, mitochondrial (lipt2), found in Danio rerio (Zebrafish).